The sequence spans 153 residues: Partner of bursicon (153 aa).

The signal sequence occupies residues 1-35; the sequence is MCNSVRTALAASNCCSIVLCCVLLLTLTLTVAVTA. Cystine bridges form between cysteine 44–cysteine 102, cysteine 68–cysteine 117, cysteine 77–cysteine 143, cysteine 81–cysteine 145, and cysteine 99–cysteine 148. The 96-residue stretch at 44 to 139 folds into the CTCK domain; the sequence is CETLPSEIHL…SATMEIRLKE (96 aa).

As to quaternary structure, heterodimer of burs and pburs.

The protein localises to the secreted. Final heterodimeric neurohormone released at the end of the molting cycle, involved in the sclerotization (tanning) of the insect cuticle, melanization and wing spreading. The chain is Partner of bursicon from Anopheles gambiae (African malaria mosquito).